The sequence spans 506 residues: Cytochrome P450 4B1 (506 aa).

Glutamate 310 provides a ligand contact to heme. Residue serine 431 is modified to Phosphoserine. Cysteine 448 provides a ligand contact to heme.

It belongs to the cytochrome P450 family. Heme is required as a cofactor.

The protein localises to the endoplasmic reticulum membrane. It localises to the microsome membrane. It carries out the reaction an organic molecule + reduced [NADPH--hemoprotein reductase] + O2 = an alcohol + oxidized [NADPH--hemoprotein reductase] + H2O + H(+). Its function is as follows. Cytochromes P450 are a group of heme-thiolate monooxygenases. In liver microsomes, this enzyme is involved in an NADPH-dependent electron transport pathway. It oxidizes a variety of structurally unrelated compounds, including steroids, fatty acids, and xenobiotics. In Oryctolagus cuniculus (Rabbit), this protein is Cytochrome P450 4B1 (CYP4B1).